The primary structure comprises 144 residues: Deoxyuridine 5'-triphosphate nucleotidohydrolase (144 aa).

Substrate is bound by residues 63-65, Asn76, and 80-82; these read RSG and TID.

Belongs to the dUTPase family. Requires Mg(2+) as cofactor.

It catalyses the reaction dUTP + H2O = dUMP + diphosphate + H(+). Its pathway is pyrimidine metabolism; dUMP biosynthesis; dUMP from dCTP (dUTP route): step 2/2. In terms of biological role, this enzyme is involved in nucleotide metabolism: it produces dUMP, the immediate precursor of thymidine nucleotides and it decreases the intracellular concentration of dUTP so that uracil cannot be incorporated into DNA. This is Deoxyuridine 5'-triphosphate nucleotidohydrolase from Bacteroides fragilis (strain YCH46).